An 89-amino-acid chain; its full sequence is Small ribosomal subunit protein uS14A (89 aa).

It belongs to the universal ribosomal protein uS14 family. As to quaternary structure, part of the 30S ribosomal subunit. Contacts proteins S3 and S10.

Binds 16S rRNA, required for the assembly of 30S particles and may also be responsible for determining the conformation of the 16S rRNA at the A site. This is Small ribosomal subunit protein uS14A from Staphylococcus aureus (strain MRSA252).